The chain runs to 1120 residues: Isoleucine--tRNA ligase (1120 aa).

Positions 64 to 74 (PFANGLPHYGH) match the 'HIGH' region motif. The 'KMSKS' region motif lies at 647-651 (KLSKR). Lys-650 lines the ATP pocket.

Belongs to the class-I aminoacyl-tRNA synthetase family. IleS type 2 subfamily. In terms of assembly, monomer. Requires Zn(2+) as cofactor.

The protein resides in the cytoplasm. It carries out the reaction tRNA(Ile) + L-isoleucine + ATP = L-isoleucyl-tRNA(Ile) + AMP + diphosphate. Catalyzes the attachment of isoleucine to tRNA(Ile). As IleRS can inadvertently accommodate and process structurally similar amino acids such as valine, to avoid such errors it has two additional distinct tRNA(Ile)-dependent editing activities. One activity is designated as 'pretransfer' editing and involves the hydrolysis of activated Val-AMP. The other activity is designated 'posttransfer' editing and involves deacylation of mischarged Val-tRNA(Ile). The sequence is that of Isoleucine--tRNA ligase from Ehrlichia canis (strain Jake).